A 201-amino-acid polypeptide reads, in one-letter code: Recombination protein RecR (201 aa).

Residues 58–73 form a C4-type zinc finger; sequence CPECGLLTEEERCGLC. A Toprim domain is found at 81 to 176; the sequence is TLLCVVESSA…RTTRIAHGVP (96 aa).

It belongs to the RecR family.

Functionally, may play a role in DNA repair. It seems to be involved in an RecBC-independent recombinational process of DNA repair. It may act with RecF and RecO. The sequence is that of Recombination protein RecR from Halorhodospira halophila (strain DSM 244 / SL1) (Ectothiorhodospira halophila (strain DSM 244 / SL1)).